The following is a 137-amino-acid chain: Small ribosomal subunit protein uS19 (137 aa).

Positions 115-137 (RNRVSHGSAGVGATRSSKFVPLK) are disordered.

Belongs to the universal ribosomal protein uS19 family.

Its function is as follows. Protein S19 forms a complex with S13 that binds strongly to the 16S ribosomal RNA. The chain is Small ribosomal subunit protein uS19 from Methanococcoides burtonii (strain DSM 6242 / NBRC 107633 / OCM 468 / ACE-M).